The chain runs to 429 residues: Glycine betaine monooxygenase oxygenase subunit (429 aa).

The Rieske domain maps to 56 to 163 (WLIAGMTCEI…VKTAGGYIFI (108 aa)). Residues Cys-98, His-100, Cys-118, and His-121 each coordinate [2Fe-2S] cluster. 2 residues coordinate Fe cation: His-217 and His-222.

It belongs to the bacterial ring-hydroxylating dioxygenase alpha subunit family. In terms of assembly, the system is composed of an oxygenase subunit (GbcA) and a reductase subunit (GbcB). The cofactor is [2Fe-2S] cluster. Fe cation is required as a cofactor.

The enzyme catalyses glycine betaine + NADH + O2 + H(+) = N,N-dimethylglycine + formaldehyde + NAD(+) + H2O. Its function is as follows. Involved in degradation of glycine betaine. Part of a Rieske-type oxygenase system that catalyzes the conversion of glycine betaine (GB) to dimethylglycine (DMG). This subunit is the terminal oxygenase component of the system. The protein is Glycine betaine monooxygenase oxygenase subunit of Pseudomonas aeruginosa (strain UCBPP-PA14).